The primary structure comprises 650 residues: MGSSHIPLDPSLNPSPSLIPKLEPVTESTQNLAFQLPNTNPQALISSAVSDFNEATDFSSDYNTVAESARSAFAQRLQRHDDVAVLDSLTGAIVPVEENPEPEPNPYSTSDSSPSVATQRPRPQPRSSELVRITDVGPESERQFREHVRKTRMIYDSLRMFLMMEEAKRNGVGGRRARADGKAGKAGSMMRDCMLWMNRDKRIVGSIPGVQVGDIFFFRFELCVMGLHGHPQSGIDFLTGSLSSNGEPIATSVIVSGGYEDDDDQGDVIMYTGQGGQDRLGRQAEHQRLEGGNLAMERSMYYGIEVRVIRGLKYENEVSSRVYVYDGLFRIVDSWFDVGKSGFGVFKYRLERIEGQAEMGSSVLKFARTLKTNPLSVRPRGYINFDISNGKENVPVYLFNDIDSDQEPLYYEYLAQTSFPPGLFVQQSGNASGCDCVNGCGSGCLCEAKNSGEIAYDYNGTLIRQKPLIHECGSACQCPPSCRNRVTQKGLRNRLEVFRSLETGWGVRSLDVLHAGAFICEYAGVALTREQANILTMNGDTLVYPARFSSARWEDWGDLSQVLADFERPSYPDIPPVDFAMDVSKMRNVACYISHSTDPNVIVQFVLHDHNSLMFPRVMLFAAENIPPMTELSLDYGVVDDWNAKLAICN.

Disordered stretches follow at residues 1-24 (MGSS…KLEP) and 95-129 (PVEE…RSSE). Residues 7 to 20 (PLDPSLNPSPSLIP) are compositionally biased toward low complexity. Residues 107–118 (YSTSDSSPSVAT) are compositionally biased toward polar residues. The region spanning 205–352 (GSIPGVQVGD…FGVFKYRLER (148 aa)) is the YDG domain. The 59-residue stretch at 432–490 (SGCDCVNGCGSGCLCEAKNSGEIAYDYNGTLIRQKPLIHECGSACQCPPSCRNRVTQKG) folds into the Pre-SET domain. Cys-434, Cys-436, Cys-440, Cys-444, Cys-446, Cys-472, Cys-476, Cys-478, and Cys-482 together coordinate Zn(2+). Residues 493 to 637 (NRLEVFRSLE…PMTELSLDYG (145 aa)) form the SET domain.

This sequence belongs to the class V-like SAM-binding methyltransferase superfamily. Histone-lysine methyltransferase family. Suvar3-9 subfamily. As to quaternary structure, component of an RNA-directed DNA methylation (RdDM) complex that contains at least MORC6, MORC1/CRT1, MORC2, SWI3D and SUVH9. Interacts directly with MORC6, MORC2 and MORC1/CRT1. Interacts with SWI3B, SWI3C and SWI3D.

It localises to the nucleus. It is found in the chromosome. Its subcellular location is the centromere. Functionally, histone methyltransferase family member that plays a role in gene silencing. Together with MORC6 and SUVH2, regulates the silencing of some transposable elements (TEs). According to PubMed:19043555, the protein does not bind S-adenosyl-L-methionine and lacks methyltransferase activity. Instead, it may function downstream of DRM2 in RNA-directed DNA methylation, binding to methylated DNA and recruiting DNA-directed RNA polymerase V to chromatin. The chain is Histone-lysine N-methyltransferase family member SUVH9 (SUVH9) from Arabidopsis thaliana (Mouse-ear cress).